A 552-amino-acid chain; its full sequence is Leiomodin-2 (552 aa).

The segment at 1-47 is interaction with tropomyosin alpha; the sequence is MSTFGYRRELSKYEDIDEDELLASLTEEELKELERELEDIEPDRNLP. Interaction with actin regions lie at residues 1 to 169 and 170 to 498; these read MSTF…SSHV and RHKK…KEIK. Positions 13–46 form a coiled coil; that stretch reads YEDIDEDELLASLTEEELKELERELEDIEPDRNL. Disordered stretches follow at residues 33 to 67, 87 to 191, and 364 to 531; these read LERE…FSRE, GACE…DGKD, and MDKQ…DNLM. A compositionally biased stretch (polar residues) spans 51-64; it reads RQKSLTEKTPTGTF. The stretch at 86-151 forms a coiled coil; it reads LGACEKDSEQ…DDEDEEKQNS (66 aa). Composition is skewed to acidic residues over residues 93 to 108 and 115 to 147; these read SEQE…EECF and VSEE…EDEE. The span at 364–377 shows a compositional bias: basic and acidic residues; the sequence is MDKQRQKRMQEQRQ. Low complexity predominate over residues 398–415; the sequence is PRSSPYTSPKSSPWSSPK. Residues 425 to 450 are compositionally biased toward pro residues; it reads SQPPAPAPPPPPPPPPPPPPPPPPVI. The segment covering 478 to 488 has biased composition (basic residues); it reads QKKKKGKKGKK. The span at 489 to 513 shows a compositional bias: basic and acidic residues; the sequence is HENSILKEIKDSLKSVSDRKSEEGS. Polar residues predominate over residues 514–524; the sequence is RPSTRPSTPQR. The tract at residues 526–545 is interaction with actin 3; it reads LHDNLMEAIRASSIKQLRRV. Positions 526 to 545 constitute a WH2 domain; that stretch reads LHDNLMEAIRASSIKQLRRV.

Belongs to the tropomodulin family. Can bind at least three actin monomers and thereby provides a nucleus for actin filament formation. Interacts (via N-terminus) with tropomyosin alpha (TPM1) (via N-terminus). May also interact with TPM2 (via N-terminus).

The protein localises to the cytoplasm. Its subcellular location is the myofibril. It localises to the sarcomere. It is found in the m line. The protein resides in the cytoskeleton. Functionally, mediates nucleation of actin filaments and thereby promotes actin polymerization. Plays a role in the regulation of actin filament length. Required for normal sarcomere organization in the heart, and for normal heart function. This Gallus gallus (Chicken) protein is Leiomodin-2 (LMOD2).